The following is a 164-amino-acid chain: Putative deoxyuridine 5'-triphosphate nucleotidohydrolase (164 aa).

A substrate-binding site is contributed by 65–67; the sequence is RSG. At K71 the chain carries N6-acetyllysine; by host. Residues 79–82, G90, and 138–139 contribute to the substrate site; these read GVVD and YG.

The protein belongs to the dUTPase family. It depends on Mg(2+) as a cofactor.

The enzyme catalyses dUTP + H2O = dUMP + diphosphate + H(+). This enzyme is involved in nucleotide metabolism: it produces dUMP, the immediate precursor of thymidine nucleotides and it decreases the intracellular concentration of dUTP so that uracil cannot be incorporated into DNA. The chain is Putative deoxyuridine 5'-triphosphate nucleotidohydrolase from Dryophytes versicolor (chameleon treefrog).